We begin with the raw amino-acid sequence, 765 residues long: DNA ligase (765 aa).

Positions 1 to 34 are disordered; sequence MAGDDEDRAVPAAEGAPPPSALPPVSGLDVKAAE. NAD(+)-binding positions include 61–65, 110–111, and Glu144; these read DAEYD and SL. The active-site N6-AMP-lysine intermediate is the Lys146. 4 residues coordinate NAD(+): Arg167, Glu204, Lys317, and Lys341. The Zn(2+) site is built by Cys446, Cys449, Cys464, and Cys470. The 79-residue stretch at 687–765 folds into the BRCT domain; that stretch reads ATDSAIAGKT…EDEWLAIAQG (79 aa).

It belongs to the NAD-dependent DNA ligase family. LigA subfamily. Mg(2+) serves as cofactor. Requires Mn(2+) as cofactor.

It carries out the reaction NAD(+) + (deoxyribonucleotide)n-3'-hydroxyl + 5'-phospho-(deoxyribonucleotide)m = (deoxyribonucleotide)n+m + AMP + beta-nicotinamide D-nucleotide.. DNA ligase that catalyzes the formation of phosphodiester linkages between 5'-phosphoryl and 3'-hydroxyl groups in double-stranded DNA using NAD as a coenzyme and as the energy source for the reaction. It is essential for DNA replication and repair of damaged DNA. The sequence is that of DNA ligase from Paracoccus denitrificans (strain Pd 1222).